We begin with the raw amino-acid sequence, 237 residues long: Ly6/PLAUR domain-containing protein 8 (237 aa).

A signal peptide spans 1-19 (MKGILVAGITAVLVAAVES). N-linked (GlcNAc...) asparagine glycans are attached at residues asparagine 45, asparagine 73, asparagine 107, asparagine 118, asparagine 132, asparagine 172, asparagine 175, and asparagine 185. Positions 125-176 (CPACYESNGTSCHGKPWKCYEEEQCVFLVAELKNDIESKSLVLKGCSNVSNA) constitute a UPAR/Ly6 domain. Asparagine 215 carries the GPI-anchor amidated asparagine lipid modification. Residues 216–237 (VGSKASLYLLALASLLLRGLLP) constitute a propeptide, removed in mature form.

The protein belongs to the CNF-like-inhibitor family. Highly N-glycosylated. Not O-glycosylated. Post-translationally, GPI-anchored. The GPI-anchor is cleaved, leading to secretion into the colonic lumen. As to expression, expressed in the large intestine. Preferentially expressed on the epithelial layer exposed to the lumen (at protein level).

It localises to the cell membrane. The protein localises to the secreted. Secreted protein specifically required to prevent invasion of Gram-negative bacteria in the inner mucus layer of the colon epithelium, a portion of the large intestine which is free of commensal microbiota. Prevents invasion of flagellated microbiota by binding to the flagellum of bacteria, such as P.mirabilis, thereby inhibiting bacterial motility in the intestinal lumen. Segregation of intestinal bacteria and epithelial cells in the colon is required to preserve intestinal homeostasis. The chain is Ly6/PLAUR domain-containing protein 8 from Homo sapiens (Human).